Consider the following 416-residue polypeptide: Putative competence-damage inducible protein (416 aa).

Belongs to the CinA family.

The polypeptide is Putative competence-damage inducible protein (Geobacillus sp. (strain WCH70)).